The primary structure comprises 368 residues: Dual-specificity RNA methyltransferase RlmN (368 aa).

Catalysis depends on glutamate 94, which acts as the Proton acceptor. Residues 100–334 enclose the Radical SAM core domain; the sequence is EEDRATLCVS…VIVRKTRGDD (235 aa). Cysteine 107 and cysteine 339 are disulfide-bonded. [4Fe-4S] cluster is bound by residues cysteine 114, cysteine 118, and cysteine 121. S-adenosyl-L-methionine contacts are provided by residues 163–164, serine 195, 217–219, and asparagine 296; these read GE and SLH. The active-site S-methylcysteine intermediate is cysteine 339.

This sequence belongs to the radical SAM superfamily. RlmN family. [4Fe-4S] cluster is required as a cofactor.

The protein resides in the cytoplasm. The enzyme catalyses adenosine(2503) in 23S rRNA + 2 reduced [2Fe-2S]-[ferredoxin] + 2 S-adenosyl-L-methionine = 2-methyladenosine(2503) in 23S rRNA + 5'-deoxyadenosine + L-methionine + 2 oxidized [2Fe-2S]-[ferredoxin] + S-adenosyl-L-homocysteine. It carries out the reaction adenosine(37) in tRNA + 2 reduced [2Fe-2S]-[ferredoxin] + 2 S-adenosyl-L-methionine = 2-methyladenosine(37) in tRNA + 5'-deoxyadenosine + L-methionine + 2 oxidized [2Fe-2S]-[ferredoxin] + S-adenosyl-L-homocysteine. Specifically methylates position 2 of adenine 2503 in 23S rRNA and position 2 of adenine 37 in tRNAs. m2A2503 modification seems to play a crucial role in the proofreading step occurring at the peptidyl transferase center and thus would serve to optimize ribosomal fidelity. This is Dual-specificity RNA methyltransferase RlmN from Aeromonas salmonicida (strain A449).